Here is a 162-residue protein sequence, read N- to C-terminus: ATP-dependent Clp protease adapter protein CLPS1, chloroplastic (162 aa).

The transit peptide at Met-1–Trp-58 directs the protein to the chloroplast.

The protein belongs to the ClpS family.

The protein resides in the plastid. It localises to the chloroplast stroma. Small adapter protein that modulate the activity of plastid Clp protease system (CLPC). Probably involved in substrate selection for plastid CLPC. The polypeptide is ATP-dependent Clp protease adapter protein CLPS1, chloroplastic (Chlamydomonas reinhardtii (Chlamydomonas smithii)).